The primary structure comprises 379 residues: Succinyl-diaminopimelate desuccinylase (379 aa).

Histidine 70 is a binding site for Zn(2+). The active site involves aspartate 72. Aspartate 103 contacts Zn(2+). Glutamate 137 (proton acceptor) is an active-site residue. Positions 138, 166, and 352 each coordinate Zn(2+).

Belongs to the peptidase M20A family. DapE subfamily. As to quaternary structure, homodimer. It depends on Zn(2+) as a cofactor. Co(2+) is required as a cofactor.

The enzyme catalyses N-succinyl-(2S,6S)-2,6-diaminopimelate + H2O = (2S,6S)-2,6-diaminopimelate + succinate. Its pathway is amino-acid biosynthesis; L-lysine biosynthesis via DAP pathway; LL-2,6-diaminopimelate from (S)-tetrahydrodipicolinate (succinylase route): step 3/3. In terms of biological role, catalyzes the hydrolysis of N-succinyl-L,L-diaminopimelic acid (SDAP), forming succinate and LL-2,6-diaminopimelate (DAP), an intermediate involved in the bacterial biosynthesis of lysine and meso-diaminopimelic acid, an essential component of bacterial cell walls. In Shewanella baltica (strain OS155 / ATCC BAA-1091), this protein is Succinyl-diaminopimelate desuccinylase.